The following is a 224-amino-acid chain: MSLMNLPEESRPREKLLALGPKSLTDAELLAIFLRTGIQGMNAIELADKLLKEFGSLRKLLSSDENEFCSHKGLGAAKFAQLQAVVEMTERYLFEKIEKEDALTSPEHTKRYLTRMLRDRHREAFYVLFLDNQHRVLKGEILFEGTIDAAAVYPREVVKRSIDYNAAAIILAHNHPSGVAEPSQADRRITKRISDAVELVDIRVLDHFVIGDGEIVSFAERGWI.

The 123-residue stretch at 102 to 224 folds into the MPN domain; it reads ALTSPEHTKR…IVSFAERGWI (123 aa). Zn(2+) contacts are provided by histidine 173, histidine 175, and aspartate 186. A JAMM motif motif is present at residues 173–186; the sequence is HNHPSGVAEPSQAD.

Belongs to the UPF0758 family.

In Aliivibrio fischeri (strain MJ11) (Vibrio fischeri), this protein is UPF0758 protein VFMJ11_0123.